Consider the following 574-residue polypeptide: Proline--tRNA ligase (574 aa).

It belongs to the class-II aminoacyl-tRNA synthetase family. ProS type 1 subfamily. In terms of assembly, homodimer.

Its subcellular location is the cytoplasm. The enzyme catalyses tRNA(Pro) + L-proline + ATP = L-prolyl-tRNA(Pro) + AMP + diphosphate. In terms of biological role, catalyzes the attachment of proline to tRNA(Pro) in a two-step reaction: proline is first activated by ATP to form Pro-AMP and then transferred to the acceptor end of tRNA(Pro). As ProRS can inadvertently accommodate and process non-cognate amino acids such as alanine and cysteine, to avoid such errors it has two additional distinct editing activities against alanine. One activity is designated as 'pretransfer' editing and involves the tRNA(Pro)-independent hydrolysis of activated Ala-AMP. The other activity is designated 'posttransfer' editing and involves deacylation of mischarged Ala-tRNA(Pro). The misacylated Cys-tRNA(Pro) is not edited by ProRS. In Fervidobacterium nodosum (strain ATCC 35602 / DSM 5306 / Rt17-B1), this protein is Proline--tRNA ligase.